The following is a 163-amino-acid chain: Small ribosomal subunit protein uS9 (163 aa).

A compositionally biased stretch (low complexity) spans 1 to 25 (MAENTNNSAVTETEETTAAFTTETN). Residues 1-40 (MAENTNNSAVTETEETTAAFTTETNSGAGTGTSTIAPGYG) form a disordered region.

It belongs to the universal ribosomal protein uS9 family.

The polypeptide is Small ribosomal subunit protein uS9 (Bifidobacterium animalis subsp. lactis (strain AD011)).